A 412-amino-acid chain; its full sequence is Multifunctional CCA protein (412 aa).

Positions 8 and 11 each coordinate ATP. 2 residues coordinate CTP: Gly8 and Arg11. Asp21 and Asp23 together coordinate Mg(2+). 3 residues coordinate ATP: Arg91, Arg137, and Arg140. Arg91, Arg137, and Arg140 together coordinate CTP. In terms of domain architecture, HD spans Thr228–Trp329.

The protein belongs to the tRNA nucleotidyltransferase/poly(A) polymerase family. Bacterial CCA-adding enzyme type 1 subfamily. In terms of assembly, monomer. Can also form homodimers and oligomers. Mg(2+) serves as cofactor. Requires Ni(2+) as cofactor.

It catalyses the reaction a tRNA precursor + 2 CTP + ATP = a tRNA with a 3' CCA end + 3 diphosphate. It carries out the reaction a tRNA with a 3' CCA end + 2 CTP + ATP = a tRNA with a 3' CCACCA end + 3 diphosphate. Its function is as follows. Catalyzes the addition and repair of the essential 3'-terminal CCA sequence in tRNAs without using a nucleic acid template. Adds these three nucleotides in the order of C, C, and A to the tRNA nucleotide-73, using CTP and ATP as substrates and producing inorganic pyrophosphate. tRNA 3'-terminal CCA addition is required both for tRNA processing and repair. Also involved in tRNA surveillance by mediating tandem CCA addition to generate a CCACCA at the 3' terminus of unstable tRNAs. While stable tRNAs receive only 3'-terminal CCA, unstable tRNAs are marked with CCACCA and rapidly degraded. The sequence is that of Multifunctional CCA protein from Escherichia coli (strain SE11).